A 453-amino-acid chain; its full sequence is tRNA modification GTPase MnmE (453 aa).

3 residues coordinate (6S)-5-formyl-5,6,7,8-tetrahydrofolate: R22, E79, and K119. The TrmE-type G domain maps to G215–G376. N225 contacts K(+). GTP is bound by residues N225–S230, T244–T250, D269–G272, and N334–D337. S229 serves as a coordination point for Mg(2+). T244, I246, and T249 together coordinate K(+). T250 contacts Mg(2+). K453 serves as a coordination point for (6S)-5-formyl-5,6,7,8-tetrahydrofolate.

The protein belongs to the TRAFAC class TrmE-Era-EngA-EngB-Septin-like GTPase superfamily. TrmE GTPase family. In terms of assembly, homodimer. Heterotetramer of two MnmE and two MnmG subunits. It depends on K(+) as a cofactor.

The protein localises to the cytoplasm. In terms of biological role, exhibits a very high intrinsic GTPase hydrolysis rate. Involved in the addition of a carboxymethylaminomethyl (cmnm) group at the wobble position (U34) of certain tRNAs, forming tRNA-cmnm(5)s(2)U34. The chain is tRNA modification GTPase MnmE from Shewanella baltica (strain OS185).